Reading from the N-terminus, the 172-residue chain is ATP synthase subunit b (172 aa).

Residues 11-30 form a helical membrane-spanning segment; it reads LIAQIINFVIVLWVLNRFAF.

The protein belongs to the ATPase B chain family. F-type ATPases have 2 components, F(1) - the catalytic core - and F(0) - the membrane proton channel. F(1) has five subunits: alpha(3), beta(3), gamma(1), delta(1), epsilon(1). F(0) has three main subunits: a(1), b(2) and c(10-14). The alpha and beta chains form an alternating ring which encloses part of the gamma chain. F(1) is attached to F(0) by a central stalk formed by the gamma and epsilon chains, while a peripheral stalk is formed by the delta and b chains.

The protein resides in the cell inner membrane. Its function is as follows. F(1)F(0) ATP synthase produces ATP from ADP in the presence of a proton or sodium gradient. F-type ATPases consist of two structural domains, F(1) containing the extramembraneous catalytic core and F(0) containing the membrane proton channel, linked together by a central stalk and a peripheral stalk. During catalysis, ATP synthesis in the catalytic domain of F(1) is coupled via a rotary mechanism of the central stalk subunits to proton translocation. In terms of biological role, component of the F(0) channel, it forms part of the peripheral stalk, linking F(1) to F(0). This chain is ATP synthase subunit b, found in Methylacidiphilum infernorum (isolate V4) (Methylokorus infernorum (strain V4)).